A 331-amino-acid chain; its full sequence is uncharacterized protein (331 aa).

It to bacterial alkanal monooxygenase alpha and beta chains.

This is an uncharacterized protein from Bacillus subtilis (strain 168).